The chain runs to 273 residues: Bidirectional sugar transporter SWEET1a (273 aa).

The Extracellular segment spans residues 1 to 6 (MEHIAR). A helical membrane pass occupies residues 7-27 (FFFGVSGNVIALFLFLSPVVT). The region spanning 7-95 (FFFGVSGNVI…VIFLIFAERK (89 aa)) is the MtN3/slv 1 domain. At 28–42 (FWRIIKKRSTEDFSG) the chain is on the cytoplasmic side. Residues 43–63 (VPYNMTLLNCLLSAWYGLPFV) form a helical membrane-spanning segment. Over 64-71 (SPNNILVT) the chain is Extracellular. Residues 72–92 (TINGTGSVIEAIYVVIFLIFA) form a helical membrane-spanning segment. At 93–101 (ERKARLKMM) the chain is on the cytoplasmic side. Residues 102 to 122 (GLLGLVTSIFTMVVLVSLLAL) traverse the membrane as a helical segment. Residues 123–128 (HGQGRK) are Extracellular-facing. A helical membrane pass occupies residues 129–149 (LFCGLAATIFSICMYASPLSI). Positions 131–214 (CGLAATIFSI…ILYAIYRNHK (84 aa)) constitute a MtN3/slv 2 domain. The Cytoplasmic segment spans residues 150 to 163 (MRLVIKTKSVEFMP). The helical transmembrane segment at 164 to 184 (FLLSLSVFLCGTSWFIYGLLG) threads the bilayer. Residues 185 to 188 (RDPF) are Extracellular-facing. Residues 189 to 209 (IAIPNGCGSFLGLMQLILYAI) form a helical membrane-spanning segment. Topologically, residues 210–273 (YRNHKGATPA…SADDKVASQV (64 aa)) are cytoplasmic.

Belongs to the SWEET sugar transporter family. As to quaternary structure, forms homooligomers and/or heterooligomers.

Its subcellular location is the cell membrane. Functionally, mediates both low-affinity uptake and efflux of sugar across the plasma membrane. The chain is Bidirectional sugar transporter SWEET1a (SWEET1A) from Oryza sativa subsp. japonica (Rice).